We begin with the raw amino-acid sequence, 576 residues long: Arginine--tRNA ligase (576 aa).

A 'HIGH' region motif is present at residues 122–132; it reads PNVAKEMHVGH.

Belongs to the class-I aminoacyl-tRNA synthetase family. Monomer.

The protein resides in the cytoplasm. The enzyme catalyses tRNA(Arg) + L-arginine + ATP = L-arginyl-tRNA(Arg) + AMP + diphosphate. The chain is Arginine--tRNA ligase from Serratia proteamaculans (strain 568).